The following is a 141-amino-acid chain: Hemoglobin subunit alpha (141 aa).

In terms of domain architecture, Globin spans 1–141 (VLSPADKTNI…VSTVLTSKYR (141 aa)). Serine 3 carries the post-translational modification Phosphoserine. The residue at position 7 (lysine 7) is an N6-succinyllysine. A Phosphothreonine modification is found at threonine 8. Lysine 11 is subject to N6-succinyllysine. Lysine 16 carries the N6-acetyllysine; alternate modification. Lysine 16 is modified (N6-succinyllysine; alternate). The residue at position 24 (tyrosine 24) is a Phosphotyrosine. Residue serine 35 is modified to Phosphoserine. Position 40 is an N6-succinyllysine (lysine 40). Serine 49 carries the post-translational modification Phosphoserine. Histidine 58 serves as a coordination point for O2. Residue histidine 87 coordinates heme b. Serine 102 is modified (phosphoserine). Threonine 108 carries the post-translational modification Phosphothreonine. Serine 124 bears the Phosphoserine mark. Phosphothreonine occurs at positions 134 and 137. A Phosphoserine modification is found at serine 138.

The protein belongs to the globin family. Heterotetramer of two alpha chains and two beta chains. As to expression, red blood cells.

Involved in oxygen transport from the lung to the various peripheral tissues. Functionally, hemopressin acts as an antagonist peptide of the cannabinoid receptor CNR1. Hemopressin-binding efficiently blocks cannabinoid receptor CNR1 and subsequent signaling. This Vulpes vulpes (Red fox) protein is Hemoglobin subunit alpha (HBA).